A 320-amino-acid chain; its full sequence is Cytochrome f (320 aa).

The signal sequence occupies residues 1 to 35 (MQTRNTFSWIREEITRSISVSLMIYIITWASISSA). 4 residues coordinate heme: Tyr36, Cys56, Cys59, and His60. Residues 286 to 306 (VQGLLFFLGSVVLAQIFLVLK) traverse the membrane as a helical segment.

It belongs to the cytochrome f family. As to quaternary structure, the 4 large subunits of the cytochrome b6-f complex are cytochrome b6, subunit IV (17 kDa polypeptide, petD), cytochrome f and the Rieske protein, while the 4 small subunits are PetG, PetL, PetM and PetN. The complex functions as a dimer. The cofactor is heme.

The protein localises to the plastid. The protein resides in the chloroplast thylakoid membrane. Functionally, component of the cytochrome b6-f complex, which mediates electron transfer between photosystem II (PSII) and photosystem I (PSI), cyclic electron flow around PSI, and state transitions. The protein is Cytochrome f of Lepidium virginicum (Virginia pepperweed).